The chain runs to 66 residues: Large ribosomal subunit protein uL29 (66 aa).

It belongs to the universal ribosomal protein uL29 family.

The chain is Large ribosomal subunit protein uL29 from Borrelia duttonii (strain Ly).